A 282-amino-acid chain; its full sequence is Glutamate racemase (282 aa).

Residues 13 to 14 (DS) and 45 to 46 (YG) contribute to the substrate site. Catalysis depends on Cys-76, which acts as the Proton donor/acceptor. 77–78 (NT) is a binding site for substrate. Catalysis depends on Cys-186, which acts as the Proton donor/acceptor. Residue 187 to 188 (TH) coordinates substrate.

This sequence belongs to the aspartate/glutamate racemases family.

The catalysed reaction is L-glutamate = D-glutamate. It functions in the pathway cell wall biogenesis; peptidoglycan biosynthesis. Provides the (R)-glutamate required for cell wall biosynthesis. The protein is Glutamate racemase of Ralstonia pickettii (strain 12J).